The primary structure comprises 295 residues: 33 kDa chaperonin (295 aa).

2 cysteine pairs are disulfide-bonded: C237/C239 and C270/C273.

Belongs to the HSP33 family. In terms of processing, under oxidizing conditions two disulfide bonds are formed involving the reactive cysteines. Under reducing conditions zinc is bound to the reactive cysteines and the protein is inactive.

The protein resides in the cytoplasm. In terms of biological role, redox regulated molecular chaperone. Protects both thermally unfolding and oxidatively damaged proteins from irreversible aggregation. Plays an important role in the bacterial defense system toward oxidative stress. In Geobacillus sp. (strain WCH70), this protein is 33 kDa chaperonin.